Here is a 31-residue protein sequence, read N- to C-terminus: U14-ctenitoxin-Co1a (31 aa).

Disulfide bonds are present. In terms of tissue distribution, expressed by the venom gland.

It localises to the secreted. In terms of biological role, omega-agatoxins are antagonists of voltage-gated calcium channels (Cav). The polypeptide is U14-ctenitoxin-Co1a (Ctenus ornatus (Brazilian spider)).